The primary structure comprises 93 residues: Cobalt transport protein CbiN (93 aa).

2 helical membrane-spanning segments follow: residues 5–25 (LMLL…NHGG) and 63–83 (LLFT…LGYC).

It belongs to the CbiN family. As to quaternary structure, forms an energy-coupling factor (ECF) transporter complex composed of an ATP-binding protein (A component, CbiO), a transmembrane protein (T component, CbiQ) and 2 possible substrate-capture proteins (S components, CbiM and CbiN) of unknown stoichimetry.

It localises to the cell inner membrane. The protein operates within cofactor biosynthesis; adenosylcobalamin biosynthesis. Functionally, part of the energy-coupling factor (ECF) transporter complex CbiMNOQ involved in cobalt import. This chain is Cobalt transport protein CbiN, found in Salmonella newport (strain SL254).